The following is a 378-amino-acid chain: Ribosomal RNA large subunit methyltransferase G (378 aa).

Belongs to the methyltransferase superfamily. RlmG family.

It localises to the cytoplasm. The enzyme catalyses guanosine(1835) in 23S rRNA + S-adenosyl-L-methionine = N(2)-methylguanosine(1835) in 23S rRNA + S-adenosyl-L-homocysteine + H(+). Specifically methylates the guanine in position 1835 (m2G1835) of 23S rRNA. In Escherichia coli O6:K15:H31 (strain 536 / UPEC), this protein is Ribosomal RNA large subunit methyltransferase G.